The primary structure comprises 274 residues: Small ribosomal subunit protein uS3 (274 aa).

The KH type-2 domain occupies 38 to 106 (IRRLLSSGLE…QVQLNILEVK (69 aa)). Positions 215–274 (AAAAPAGADRPRRERPSGTRPRRSGASGTTATGTDAGRAAGGEEAAPDAAAPVEAQSTES) are disordered. Over residues 238-266 (SGASGTTATGTDAGRAAGGEEAAPDAAAP) the composition is skewed to low complexity.

The protein belongs to the universal ribosomal protein uS3 family. Part of the 30S ribosomal subunit. Forms a tight complex with proteins S10 and S14.

Functionally, binds the lower part of the 30S subunit head. Binds mRNA in the 70S ribosome, positioning it for translation. This Mycobacterium tuberculosis (strain ATCC 25177 / H37Ra) protein is Small ribosomal subunit protein uS3.